The following is a 393-amino-acid chain: CCA-adding enzyme (393 aa).

ATP contacts are provided by G27 and R30. Positions 27 and 30 each coordinate CTP. D40 and D42 together coordinate Mg(2+). The ATP site is built by R111, D154, R157, R160, and R163. Residues R111, D154, R157, R160, and R163 each coordinate CTP.

Belongs to the tRNA nucleotidyltransferase/poly(A) polymerase family. Bacterial CCA-adding enzyme type 3 subfamily. As to quaternary structure, homodimer. It depends on Mg(2+) as a cofactor.

It catalyses the reaction a tRNA precursor + 2 CTP + ATP = a tRNA with a 3' CCA end + 3 diphosphate. The enzyme catalyses a tRNA with a 3' CCA end + 2 CTP + ATP = a tRNA with a 3' CCACCA end + 3 diphosphate. Functionally, catalyzes the addition and repair of the essential 3'-terminal CCA sequence in tRNAs without using a nucleic acid template. Adds these three nucleotides in the order of C, C, and A to the tRNA nucleotide-73, using CTP and ATP as substrates and producing inorganic pyrophosphate. tRNA 3'-terminal CCA addition is required both for tRNA processing and repair. Also involved in tRNA surveillance by mediating tandem CCA addition to generate a CCACCA at the 3' terminus of unstable tRNAs. While stable tRNAs receive only 3'-terminal CCA, unstable tRNAs are marked with CCACCA and rapidly degraded. The sequence is that of CCA-adding enzyme from Listeria monocytogenes serovar 1/2a (strain ATCC BAA-679 / EGD-e).